Consider the following 287-residue polypeptide: Rhomboid-like protein 18 (287 aa).

A run of 6 helical transmembrane segments spans residues 10 to 30 (NAPVTKAFVIATALFTVFFGI), 53 to 73 (LIISAFAFSSTTQLLSGLYLL), 90 to 110 (VFIFFSGFVSLILETILLSLT), 117 to 137 (LLTSGPYALVFASFVPFFLDI), 145 to 165 (VLGVHFSDKSFIYLAGVQLLL), and 172 to 192 (IFTGICGIIAGSLYRLNIFGI). Residues 244 to 284 (EPSEEAIATLVSMGFDQNAARQALVHARNDVNAATNILLEA) form the UBA domain.

This sequence belongs to the peptidase S54 family.

The protein localises to the membrane. In terms of biological role, probable rhomboid-type serine protease that catalyzes intramembrane proteolysis. This Arabidopsis thaliana (Mouse-ear cress) protein is Rhomboid-like protein 18.